The following is a 323-amino-acid chain: Apolipoprotein E (323 aa).

An N-terminal signal peptide occupies residues 1 to 18 (MKVLWAALVVTLLAGCWA). Tandem repeats lie at residues 86–107 (ALMD…EQLG), 108–129 (PMTS…ARLR), 130–151 (SDME…AMLG), 152–173 (QSSE…KRVL), 174–195 (RDAE…EGAE), 196–217 (RSVS…ERNA), 218–239 (KVGA…QQLR), and 240–261 (GQLE…EQIQ). Positions 86 to 261 (ALMDETMKEV…HLEEMREQIQ (176 aa)) are 8 X 22 AA approximate tandem repeats. M149 bears the Methionine sulfoxide mark. A Phosphoserine modification is found at S153. The interval 164–174 (HMRKLRKRVLR) is LDL and other lipoprotein receptors binding. 168-171 (LRKR) contributes to the heparin binding site. The lipid-binding and lipoprotein association stretch occupies residues 216-296 (NAKVGALATQ…SWFEPLLEDM (81 aa)). 235–242 (GQQLRGQL) lines the heparin pocket. The interval 272 to 323 (DQIRQKAEAFQARLKSWFEPLLEDMQRQWDGLVEKVQAAVATIPTSKPVEEP) is homooligomerization. A specificity for association with VLDL region spans residues 284-296 (RLKSWFEPLLEDM).

Belongs to the apolipoprotein A1/A4/E family. Homotetramer. May interact with ABCA1; functionally associated with ABCA1 in the biogenesis of HDLs. May interact with APP/A4 amyloid-beta peptide; the interaction is extremely stable in vitro but its physiological significance is unclear. May interact with MAPT. May interact with MAP2. In the cerebrospinal fluid, interacts with secreted SORL1. Interacts with PMEL; this allows the loading of PMEL luminal fragment on ILVs to induce fibril nucleation. Post-translationally, APOE exists as multiple glycosylated and sialylated glycoforms within cells and in plasma. The extent of glycosylation and sialylation are tissue and context specific. Glycated in plasma VLDL. In terms of processing, phosphorylated by FAM20C in the extracellular medium.

It localises to the secreted. The protein resides in the extracellular space. It is found in the extracellular matrix. Its subcellular location is the extracellular vesicle. The protein localises to the endosome. It localises to the multivesicular body. APOE is an apolipoprotein, a protein associating with lipid particles, that mainly functions in lipoprotein-mediated lipid transport between organs via the plasma and interstitial fluids. APOE is a core component of plasma lipoproteins and is involved in their production, conversion and clearance. Apolipoproteins are amphipathic molecules that interact both with lipids of the lipoprotein particle core and the aqueous environment of the plasma. As such, APOE associates with chylomicrons, chylomicron remnants, very low density lipoproteins (VLDL) and intermediate density lipoproteins (IDL) but shows a preferential binding to high-density lipoproteins (HDL). It also binds a wide range of cellular receptors including the LDL receptor/LDLR and the very low-density lipoprotein receptor/VLDLR that mediate the cellular uptake of the APOE-containing lipoprotein particles. Finally, APOE also has a heparin-binding activity and binds heparan-sulfate proteoglycans on the surface of cells, a property that supports the capture and the receptor-mediated uptake of APOE-containing lipoproteins by cells. The protein is Apolipoprotein E (APOE) of Canis lupus familiaris (Dog).